Reading from the N-terminus, the 662-residue chain is MAAENEASQESALGAYSPVDYMSITSFPRLPEDEPAPAAPLRGRKDEDAFLGDPDTDPDSFLKSARLQRLPSSSSEMGSQDGSPLRETRKDPFSAAAAECSCRQDGLTVIVTACLTFATGVTVALVMQIYFGDPQIFQQGAVVTDASSCTALGMEVLSKQGSSVDAAVAAALCLGIVAPHSSGLGGGGVMLVHDIRRNESHLIDFRESAPGALREEALQRSWDTKPGLLVGVPGMVKGLHEAHQLYGRLPWSQVLAFAAAVAQDGFNVTHDLAHALAEQLPPNASDRFLDTFLPLGHPPLPGSLLRRPDLAEVLDILGTSGPAAFYNGGNLTLEMVAEAQHAGGVITEEDFSNYSALTEKPVCGVYRGHLVLSPPPPHTGPALISALNILEGFNLTSLVSREQALHWVAETLKIALALASRLGDPVYDSTITESMDDMLSKVEAANFRGHISDSQAAPAPLLPVYELDGAPTAAQVLVMGPDDFIVAMVSSLNRPFGSGLLTPSGILLNSQMLDFSWPNRTANHSAPSLENSVQPGKRPLSFLLPTVVRPAEGLCGTYLALGANGAARGLSGLTQVLLNVLTLNRNLSDSLARGRLHPDLQSNLLQVDSEFTEEEIEFLEARGHHVEKVDVLSWVHGSRRTNTFIIGVKDPRSPDAAGATIL.

Residues 1-106 (MAAENEASQE…AAECSCRQDG (106 aa)) are Cytoplasmic-facing. Phosphoserine occurs at positions 17, 72, 79, and 83. The disordered stretch occupies residues 26-90 (SFPRLPEDEP…DGSPLRETRK (65 aa)). A compositionally biased stretch (low complexity) spans 72 to 83 (SSSSEMGSQDGS). The chain crosses the membrane as a helical; Signal-anchor for type II membrane protein span at residues 107-127 (LTVIVTACLTFATGVTVALVM). At 128-662 (QIYFGDPQIF…SPDAAGATIL (535 aa)) the chain is on the extracellular side. Asn-198, Asn-267, Asn-283, Asn-330, Asn-353, Asn-394, Asn-519, Asn-523, and Asn-586 each carry an N-linked (GlcNAc...) asparagine glycan.

Belongs to the gamma-glutamyltransferase family. Heterodimer composed of the light and heavy chains. The active site is located in the light chain. Post-translationally, cleaved by autocatalysis into a large and a small subunit and the autocatalytic cleavage is essential to the functional activation of the enzyme.

It localises to the membrane. The enzyme catalyses an N-terminal (5-L-glutamyl)-[peptide] + an alpha-amino acid = 5-L-glutamyl amino acid + an N-terminal L-alpha-aminoacyl-[peptide]. The catalysed reaction is glutathione + H2O = L-cysteinylglycine + L-glutamate. It carries out the reaction an S-substituted glutathione + H2O = an S-substituted L-cysteinylglycine + L-glutamate. The protein operates within sulfur metabolism; glutathione metabolism. Hydrolyzes and transfers gamma-glutamyl moieties from glutathione and other gamma-glutamyl compounds to acceptors. This is Glutathione hydrolase 7 from Mus musculus (Mouse).